The chain runs to 806 residues: NADH:(hydroxy)cinnamate reductase subunit CrdB (806 aa).

Ser257 carries the FMN phosphoryl serine modification. The FAD site is built by Ala310, Glu329, Asn337, Thr338, Gly342, Gly343, and Asp576. Residue Arg635 is the Proton donor of the active site. Residues His742, Glu771, Ala786, and Leu787 each contribute to the FAD site.

This sequence belongs to the FAD-dependent oxidoreductase 2 family. FRD/SDH subfamily. NADH:(hydroxy)cinnamate reductase Crd is a heterodimer composed of CrdA and CrdB subunits, encoded by adjacent genes. Requires FAD as cofactor. It depends on FMN as a cofactor. Post-translationally, is flavinylated on Ser-257 by ApbE, encoded in a neighboring gene. Covalent attachment of FMN is essential for catalytic activity.

It carries out the reaction 3-phenylpropanoate + NAD(+) = (E)-cinnamate + NADH + H(+). The catalysed reaction is 3-(3,4-dihydroxyphenyl)propanoate + NAD(+) = (E)-caffeate + NADH + H(+). It catalyses the reaction phloretate + NAD(+) = (E)-4-coumarate + NADH + H(+). The enzyme catalyses dihydroferulate + NAD(+) = (E)-ferulate + NADH + H(+). With respect to regulation, is inactivated by molecular oxygen, allowing regulation of Crd activity by medium oxygen level. Functionally, component of the NADH:(hydroxy)cinnamate reductase Crd that catalyzes the reduction of the double bond in cinnamate, p-coumarate, caffeate, and ferulate under anaerobic conditions with NADH or methyl viologen as the electron donor. Is moderately active against acrylate and practically inactive against urocanate, fumarate, methacrylate and crotonate. CrdB is the catalytic subunit that binds substrates. Is likely involved in protecting V.ruber from (hydroxy)cinnamate poisoning. This is NADH:(hydroxy)cinnamate reductase subunit CrdB from Vibrio ruber (strain DSM 16370 / JCM 11486 / BCRC 17186 / CECT 7878 / LMG 23124 / VR1).